Reading from the N-terminus, the 191-residue chain is MVDTNNVKLRIENIVASVDLFAQLDLEKVLDICPNSKYNPEEFPGIICRFDDPKVALLIFSSGKLVVTGAKSIHDIERAVAKLIEKLKGIGVKFKRAPLIDIQNMVFSGDIGREFNLDNVALTLPNCEYEPEQFPGVIYRVKDPRAVILLFSSGKIVCSGAKSEADAWEAVRKLLRELEKYGLIEEEEEEL.

Tandem repeats lie at residues 11–87 and 102–178.

Belongs to the TBP family.

Its function is as follows. General factor that plays a role in the activation of archaeal genes transcribed by RNA polymerase. Binds specifically to the TATA box promoter element which lies close to the position of transcription initiation. This chain is TATA-box-binding protein (tbp), found in Pyrococcus abyssi (strain GE5 / Orsay).